The following is a 117-amino-acid chain: Holo-[acyl-carrier-protein] synthase (117 aa).

Residues Asp8 and Glu58 each contribute to the Mg(2+) site.

The protein belongs to the P-Pant transferase superfamily. AcpS family. It depends on Mg(2+) as a cofactor.

It is found in the cytoplasm. It catalyses the reaction apo-[ACP] + CoA = holo-[ACP] + adenosine 3',5'-bisphosphate + H(+). Its function is as follows. Transfers the 4'-phosphopantetheine moiety from coenzyme A to a Ser of acyl-carrier-protein. In Enterococcus faecalis (strain ATCC 700802 / V583), this protein is Holo-[acyl-carrier-protein] synthase.